The following is a 589-amino-acid chain: Putative sphingomyelin phosphodiesterase asm-3 (589 aa).

The signal sequence occupies residues 1 to 17 (MLLGLLVLSLAFQGTLA). In terms of domain architecture, Saposin B-type spans 18 to 101 (VTECEECKSI…LMKNDCGDFV (84 aa)). Disulfide bonds link Cys21/Cys97, Cys24/Cys89, and Cys52/Cys63. A glycan (N-linked (GlcNAc...) asparagine) is linked at Asn109. Positions 139 and 141 each coordinate Zn(2+). 2 disulfide bridges follow: Cys154-Cys159 and Cys160-Cys188. Asp217 contacts Zn(2+). A glycan (N-linked (GlcNAc...) asparagine) is linked at Asn237. Residue Asn257 coordinates Zn(2+). Residue Asn334 is glycosylated (N-linked (GlcNAc...) asparagine). Zn(2+)-binding residues include His364, His398, and His400. The N-linked (GlcNAc...) asparagine glycan is linked to Asn463. 2 disulfide bridges follow: Cys530-Cys535 and Cys541-Cys553. Residues 562-589 (KPEPKKNKYSARFATSNERRRGKEECKI) form a disordered region. The segment covering 578 to 589 (NERRRGKEECKI) has biased composition (basic and acidic residues).

This sequence belongs to the acid sphingomyelinase family. Zn(2+) serves as cofactor.

It is found in the secreted. The catalysed reaction is an N-(acyl)-sphingosylphosphocholine + H2O = an N-acyl-sphingoid base + phosphocholine + H(+). The enzyme catalyses a sphingomyelin + H2O = phosphocholine + an N-acylsphing-4-enine + H(+). It carries out the reaction an N-acyl-15-methylhexadecasphing-4-enine-1-phosphocholine + H2O = an N-acyl-15-methylhexadecasphing-4-enine + phosphocholine + H(+). The protein operates within lipid metabolism; sphingolipid metabolism. In terms of biological role, converts sphingomyelin to ceramide (N-acyl-sphingoid base) and phosphocholine. C.elegans contain specific sphingoid bases, which are unique or different in structure compared to the sphingoid bases found in other animals. Two examples of these distinctive compounds are: 15-methylhexadecasphinganine and 15-methylhexadecasphing-4-enine. The protein is Putative sphingomyelin phosphodiesterase asm-3 (asm-3) of Caenorhabditis elegans.